We begin with the raw amino-acid sequence, 520 residues long: Fusaridione A cluster transcription factor fsdR (520 aa).

The disordered stretch occupies residues 1-30 (MSTGPPSGISLVSMTTPRKSGQHTPESWSK).

The protein resides in the nucleus. Functionally, transcription factor that regulates the expression of the gene cluster that mediates the biosynthesis of fusaridione A. The protein is Fusaridione A cluster transcription factor fsdR of Fusarium heterosporum.